A 359-amino-acid chain; its full sequence is 3-dehydroquinate synthase (359 aa).

NAD(+) contacts are provided by residues 71–76 (DGEAYK), 105–109 (GVVGD), 129–130 (TT), K142, and K151. Residues E184, H247, and H264 each contribute to the Zn(2+) site.

This sequence belongs to the sugar phosphate cyclases superfamily. Dehydroquinate synthase family. Co(2+) is required as a cofactor. Requires Zn(2+) as cofactor. It depends on NAD(+) as a cofactor.

It is found in the cytoplasm. It catalyses the reaction 7-phospho-2-dehydro-3-deoxy-D-arabino-heptonate = 3-dehydroquinate + phosphate. It functions in the pathway metabolic intermediate biosynthesis; chorismate biosynthesis; chorismate from D-erythrose 4-phosphate and phosphoenolpyruvate: step 2/7. In terms of biological role, catalyzes the conversion of 3-deoxy-D-arabino-heptulosonate 7-phosphate (DAHP) to dehydroquinate (DHQ). In Burkholderia orbicola (strain MC0-3), this protein is 3-dehydroquinate synthase.